The following is a 278-amino-acid chain: Phosphonates import ATP-binding protein PhnC 1 (278 aa).

Residues 5-253 (IRVDSLNKTF…FLNELYGAEG (249 aa)) enclose the ABC transporter domain. 37–44 (GASGSGKS) provides a ligand contact to ATP.

This sequence belongs to the ABC transporter superfamily. Phosphonates importer (TC 3.A.1.9.1) family. The complex is composed of two ATP-binding proteins (PhnC), two transmembrane proteins (PhnE) and a solute-binding protein (PhnD).

It is found in the cell inner membrane. The catalysed reaction is phosphonate(out) + ATP + H2O = phosphonate(in) + ADP + phosphate + H(+). Functionally, part of the ABC transporter complex PhnCDE involved in phosphonates import. Responsible for energy coupling to the transport system. The polypeptide is Phosphonates import ATP-binding protein PhnC 1 (Pseudomonas aeruginosa (strain UCBPP-PA14)).